The following is a 268-amino-acid chain: Undecaprenyl-diphosphatase (268 aa).

7 helical membrane-spanning segments follow: residues Ile-7 to Ser-27, Leu-87 to Tyr-107, Phe-116 to Ser-136, Ile-146 to Phe-166, Val-187 to Ile-207, Phe-210 to Ile-230, and Ser-247 to Met-267.

Belongs to the UppP family.

Its subcellular location is the cell membrane. The catalysed reaction is di-trans,octa-cis-undecaprenyl diphosphate + H2O = di-trans,octa-cis-undecaprenyl phosphate + phosphate + H(+). Its function is as follows. Catalyzes the dephosphorylation of undecaprenyl diphosphate (UPP). Confers resistance to bacitracin. This chain is Undecaprenyl-diphosphatase, found in Buchnera aphidicola subsp. Baizongia pistaciae (strain Bp).